A 170-amino-acid polypeptide reads, in one-letter code: Ureidoglycolate lyase (170 aa).

The protein belongs to the ureidoglycolate lyase family. In terms of assembly, homodimer. Ni(2+) is required as a cofactor.

It catalyses the reaction (S)-ureidoglycolate = urea + glyoxylate. It participates in nitrogen metabolism; (S)-allantoin degradation. Its function is as follows. Catalyzes the catabolism of the allantoin degradation intermediate (S)-ureidoglycolate, generating urea and glyoxylate. Involved in the utilization of allantoin as nitrogen source. The polypeptide is Ureidoglycolate lyase (Stutzerimonas stutzeri (strain A1501) (Pseudomonas stutzeri)).